Consider the following 217-residue polypeptide: Imidazole glycerol phosphate synthase subunit HisH (217 aa).

The Glutamine amidotransferase type-1 domain maps to 3–217 (SVAVIDYGMG…FLRWEPWSSR (215 aa)). Cys82 (nucleophile) is an active-site residue. Active-site residues include His193 and Glu195.

Heterodimer of HisH and HisF.

The protein resides in the cytoplasm. It carries out the reaction 5-[(5-phospho-1-deoxy-D-ribulos-1-ylimino)methylamino]-1-(5-phospho-beta-D-ribosyl)imidazole-4-carboxamide + L-glutamine = D-erythro-1-(imidazol-4-yl)glycerol 3-phosphate + 5-amino-1-(5-phospho-beta-D-ribosyl)imidazole-4-carboxamide + L-glutamate + H(+). The enzyme catalyses L-glutamine + H2O = L-glutamate + NH4(+). It participates in amino-acid biosynthesis; L-histidine biosynthesis; L-histidine from 5-phospho-alpha-D-ribose 1-diphosphate: step 5/9. In terms of biological role, IGPS catalyzes the conversion of PRFAR and glutamine to IGP, AICAR and glutamate. The HisH subunit catalyzes the hydrolysis of glutamine to glutamate and ammonia as part of the synthesis of IGP and AICAR. The resulting ammonia molecule is channeled to the active site of HisF. This chain is Imidazole glycerol phosphate synthase subunit HisH, found in Methylococcus capsulatus (strain ATCC 33009 / NCIMB 11132 / Bath).